The sequence spans 455 residues: Bifunctional protein GlmU (455 aa).

The segment at 1-228 (MYKCALVLAA…YEETIGVNSR (228 aa)) is pyrophosphorylase. UDP-N-acetyl-alpha-D-glucosamine is bound by residues 8–11 (LAAG), Lys-22, Gln-73, and 78–79 (GT). Asp-103 serves as a coordination point for Mg(2+). Positions 140, 154, 169, and 226 each coordinate UDP-N-acetyl-alpha-D-glucosamine. Asn-226 is a binding site for Mg(2+). The segment at 229 to 249 (VQLAEAEEILKNRINLMHMEN) is linker. An N-acetyltransferase region spans residues 250-455 (GVTLIDPRTT…GWVDKKGLKK (206 aa)). The UDP-N-acetyl-alpha-D-glucosamine site is built by Arg-331 and Lys-349. The active-site Proton acceptor is His-361. Residues Tyr-364 and Asn-375 each contribute to the UDP-N-acetyl-alpha-D-glucosamine site. Residues 384-385 (NY), Ala-421, and Arg-438 each bind acetyl-CoA.

It in the N-terminal section; belongs to the N-acetylglucosamine-1-phosphate uridyltransferase family. This sequence in the C-terminal section; belongs to the transferase hexapeptide repeat family. Homotrimer. Mg(2+) serves as cofactor.

Its subcellular location is the cytoplasm. It catalyses the reaction alpha-D-glucosamine 1-phosphate + acetyl-CoA = N-acetyl-alpha-D-glucosamine 1-phosphate + CoA + H(+). It carries out the reaction N-acetyl-alpha-D-glucosamine 1-phosphate + UTP + H(+) = UDP-N-acetyl-alpha-D-glucosamine + diphosphate. The protein operates within nucleotide-sugar biosynthesis; UDP-N-acetyl-alpha-D-glucosamine biosynthesis; N-acetyl-alpha-D-glucosamine 1-phosphate from alpha-D-glucosamine 6-phosphate (route II): step 2/2. It participates in nucleotide-sugar biosynthesis; UDP-N-acetyl-alpha-D-glucosamine biosynthesis; UDP-N-acetyl-alpha-D-glucosamine from N-acetyl-alpha-D-glucosamine 1-phosphate: step 1/1. Its pathway is bacterial outer membrane biogenesis; LPS lipid A biosynthesis. Its function is as follows. Catalyzes the last two sequential reactions in the de novo biosynthetic pathway for UDP-N-acetylglucosamine (UDP-GlcNAc). The C-terminal domain catalyzes the transfer of acetyl group from acetyl coenzyme A to glucosamine-1-phosphate (GlcN-1-P) to produce N-acetylglucosamine-1-phosphate (GlcNAc-1-P), which is converted into UDP-GlcNAc by the transfer of uridine 5-monophosphate (from uridine 5-triphosphate), a reaction catalyzed by the N-terminal domain. In Clostridium beijerinckii (strain ATCC 51743 / NCIMB 8052) (Clostridium acetobutylicum), this protein is Bifunctional protein GlmU.